The sequence spans 377 residues: Tryptophan--tRNA ligase, mitochondrial (377 aa).

ATP-binding positions include Gln21 and 28–31 (HLGN). The 'HIGH' region signature appears at 22 to 31 (PTSSALHLGN). Asp181 is an L-tryptophan binding site. Residues 193–195 (GED), 242–246 (KMSKS), and Lys245 each bind ATP. The short motif at 242–246 (KMSKS) is the 'KMSKS' region element.

Belongs to the class-I aminoacyl-tRNA synthetase family.

It localises to the mitochondrion matrix. It carries out the reaction tRNA(Trp) + L-tryptophan + ATP = L-tryptophyl-tRNA(Trp) + AMP + diphosphate + H(+). This chain is Tryptophan--tRNA ligase, mitochondrial (wars2), found in Dictyostelium discoideum (Social amoeba).